A 455-amino-acid chain; its full sequence is Bifunctional protein GlmU (455 aa).

The pyrophosphorylase stretch occupies residues 1–232 (MASTTGALIL…DPNLLGVNNP (232 aa)). Residues 10–13 (LAAG), Lys-24, Gln-75, and 80–81 (GT) contribute to the UDP-N-acetyl-alpha-D-glucosamine site. Residue Asp-106 participates in Mg(2+) binding. Residues Gly-141, Glu-155, Asn-172, and Asn-230 each contribute to the UDP-N-acetyl-alpha-D-glucosamine site. Position 230 (Asn-230) interacts with Mg(2+). The interval 233–253 (AELIRSEALLRTRLVIGHIEG) is linker. Residues 254–455 (GVLIHAPETV…QTNLPRKPKA (202 aa)) are N-acetyltransferase. Positions 336 and 354 each coordinate UDP-N-acetyl-alpha-D-glucosamine. The active-site Proton acceptor is His-366. UDP-N-acetyl-alpha-D-glucosamine is bound by residues Tyr-369 and Asn-380. Acetyl-CoA is bound by residues Ala-383, 389 to 390 (NY), Ser-408, Ala-426, and Arg-443.

In the N-terminal section; belongs to the N-acetylglucosamine-1-phosphate uridyltransferase family. It in the C-terminal section; belongs to the transferase hexapeptide repeat family. Homotrimer. The cofactor is Mg(2+).

The protein localises to the cytoplasm. The enzyme catalyses alpha-D-glucosamine 1-phosphate + acetyl-CoA = N-acetyl-alpha-D-glucosamine 1-phosphate + CoA + H(+). It carries out the reaction N-acetyl-alpha-D-glucosamine 1-phosphate + UTP + H(+) = UDP-N-acetyl-alpha-D-glucosamine + diphosphate. It participates in nucleotide-sugar biosynthesis; UDP-N-acetyl-alpha-D-glucosamine biosynthesis; N-acetyl-alpha-D-glucosamine 1-phosphate from alpha-D-glucosamine 6-phosphate (route II): step 2/2. Its pathway is nucleotide-sugar biosynthesis; UDP-N-acetyl-alpha-D-glucosamine biosynthesis; UDP-N-acetyl-alpha-D-glucosamine from N-acetyl-alpha-D-glucosamine 1-phosphate: step 1/1. It functions in the pathway bacterial outer membrane biogenesis; LPS lipid A biosynthesis. Catalyzes the last two sequential reactions in the de novo biosynthetic pathway for UDP-N-acetylglucosamine (UDP-GlcNAc). The C-terminal domain catalyzes the transfer of acetyl group from acetyl coenzyme A to glucosamine-1-phosphate (GlcN-1-P) to produce N-acetylglucosamine-1-phosphate (GlcNAc-1-P), which is converted into UDP-GlcNAc by the transfer of uridine 5-monophosphate (from uridine 5-triphosphate), a reaction catalyzed by the N-terminal domain. The protein is Bifunctional protein GlmU of Nitratidesulfovibrio vulgaris (strain DP4) (Desulfovibrio vulgaris).